Consider the following 443-residue polypeptide: Pentatricopeptide repeat-containing protein 6, mitochondrial (443 aa).

A mitochondrion-targeting transit peptide spans 1–13 (MRILGSLPNNIRK). PPR repeat units lie at residues 130 to 164 (NIVD…RIRP) and 220 to 254 (NSTT…NENS).

It is found in the mitochondrion. Mitochondrial RNA-binding protein required for the stability of the atp9 mRNA. The polypeptide is Pentatricopeptide repeat-containing protein 6, mitochondrial (ppr6) (Schizosaccharomyces pombe (strain 972 / ATCC 24843) (Fission yeast)).